The chain runs to 707 residues: E3 ubiquitin-protein ligase MARCHF7 (707 aa).

Methionine 1 carries the post-translational modification N-acetylmethionine. Disordered stretches follow at residues 1 to 126 (MESK…QVPR), 157 to 279 (LMDY…RRTT), 294 to 343 (FFSR…RASE), 361 to 425 (SHNH…HIFR), and 444 to 473 (AANR…GRNT). Residues 17–33 (SSSLSARMMSGSRGSSL) are compositionally biased toward low complexity. Over residues 37–48 (YHSRDSSFRLDS) the composition is skewed to basic and acidic residues. Over residues 52 to 65 (STSASASASPFQSA) the composition is skewed to low complexity. Polar residues-rich tracts occupy residues 66–83 (WYSE…SQNQ), 95–126 (SCTN…QVPR), 189–212 (NSMS…HQTI), and 254–270 (ISNS…FQES). Residues 294 to 303 (FFSRRSSQDS) are compositionally biased toward low complexity. Polar residues-rich tracts occupy residues 304 to 336 (LNTR…TSEV), 373 to 392 (FNQE…SLRN), and 412 to 421 (IPTSDTSSRS). 2 positions are modified to phosphoserine: serine 317 and serine 389. A compositionally biased stretch (low complexity) spans 444 to 470 (AANRPQASAASSSATTGGSTSDSAQGG). The segment at 544–614 (SEEEEGDLCR…ELCKEKLELN (71 aa)) adopts an RING-CH-type zinc-finger fold. Positions 552, 555, 570, 572, 580, 583, 604, and 607 each coordinate Zn(2+). Residue threonine 686 is modified to Phosphothreonine. Phosphoserine occurs at positions 687 and 691.

It is found in the cytoplasm. It carries out the reaction S-ubiquitinyl-[E2 ubiquitin-conjugating enzyme]-L-cysteine + [acceptor protein]-L-lysine = [E2 ubiquitin-conjugating enzyme]-L-cysteine + N(6)-ubiquitinyl-[acceptor protein]-L-lysine.. Its pathway is protein modification; protein ubiquitination. In terms of biological role, E3 ubiquitin-protein ligase which may specifically enhance the E2 activity of HIP2. E3 ubiquitin ligases accept ubiquitin from an E2 ubiquitin-conjugating enzyme in the form of a thioester and then directly transfer the ubiquitin to targeted substrates. May be involved in T-cell proliferation by regulating LIF secretion. May play a role in lysosome homeostasis. Promotes 'Lys-6', 'Lys-11' and 'Lys-63'-linked mixed polyubiquitination on ATG14 leading to the inhibition of autophagy by impairing the interaction between ATG14 and STX7. Participates in the dopamine-mediated negative regulation of the NLRP3 inflammasome by promoting its uibiquitination and subsequent degradation. This is E3 ubiquitin-protein ligase MARCHF7 (MARCHF7) from Pongo abelii (Sumatran orangutan).